A 515-amino-acid polypeptide reads, in one-letter code: MCGINGIIRFGKEVIKEEINKMNKAIKHRGPDDEGIFIYNFKNYSIGLGHVRLAILDLSEKGHQPMGYNVDEDKIIYRDDELDRADIIIVYNGEIYNYLELKEKFNLETETGTDTEVILKLYNKLGFDCVKEFNGMWAFCIFDKKKGLIFCSRDRLGVKPFYYYWDGNEFIFSSELKGILAVKEINKKENINKDAVELYFALGFIPSPYSIYKNTFKLEARQNLIFDLDKREIRKYYYWELPDYKPIYDKKKLIEEGKKLLYDAVKIRMRSDVPVGAFLSGGLDSSTVVGVMREFTDLSKLHTFSIGFEGKYDETPYIKIVVDYFKTQHHHYYFKERDFEELIDKYSWIYDEPFGDYSGFPTYKVSEMARKFVTVVLSGDGGDEVFGGYMTHLNGYRMDFIRKLPKFLRVVGSKLPVKKDLNGIANLYLLKEAFRLSLINPEEFYAESIKEDAIRPEIYKKWTIEKLRYCLNKGDNKLGEALRIFDLLFNTLCDNFLVKVDRASMLTLWKLEVHF.

Cys2 (for GATase activity) is an active-site residue. The 228-residue stretch at Cys2–Asp229 folds into the Glutamine amidotransferase type-2 domain. L-glutamine contacts are provided by residues Arg52 to Leu56, Asn92 to Glu94, and Asp114. ATP is bound by residues Ile306 and Ser378–Gly379.

It belongs to the asparagine synthetase family.

The enzyme catalyses L-aspartate + L-glutamine + ATP + H2O = L-asparagine + L-glutamate + AMP + diphosphate + H(+). Its pathway is amino-acid biosynthesis; L-asparagine biosynthesis; L-asparagine from L-aspartate (L-Gln route): step 1/1. This Methanocaldococcus jannaschii (strain ATCC 43067 / DSM 2661 / JAL-1 / JCM 10045 / NBRC 100440) (Methanococcus jannaschii) protein is Putative asparagine synthetase [glutamine-hydrolyzing] 2.